Consider the following 261-residue polypeptide: Thiamine thiazole synthase (261 aa).

NAD(+) contacts are provided by residues serine 40, 59–60 (ER), glycine 67, valine 133, and 159–161 (HVD). Fe cation-binding residues include aspartate 161 and histidine 176. NAD(+)-binding residues include serine 179 and methionine 226. Arginine 236 contributes to the glycine binding site.

Belongs to the THI4 family. In terms of assembly, homooctamer; tetramer of dimers. It depends on Fe(2+) as a cofactor.

It catalyses the reaction hydrogen sulfide + glycine + NAD(+) = ADP-5-ethyl-4-methylthiazole-2-carboxylate + nicotinamide + 3 H2O + H(+). Its pathway is cofactor biosynthesis; thiamine diphosphate biosynthesis. Involved in the biosynthesis of the thiazole moiety of thiamine. Catalyzes the conversion of NAD and glycine to adenosine diphosphate 5-(2-hydroxyethyl)-4-methylthiazole-2-carboxylate (ADT), an adenylated thiazole intermediate, using free sulfide as a source of sulfur. The sequence is that of Thiamine thiazole synthase from Methanococcus vannielii (strain ATCC 35089 / DSM 1224 / JCM 13029 / OCM 148 / SB).